Consider the following 148-residue polypeptide: Lysozyme-like protein 6 (148 aa).

Positions 1–19 (MTSPLLISLASCLVAVNQA) are cleaved as a signal peptide. The 129-residue stretch at 20 to 148 (SLIGRCDLAK…SYWMTGCHLA (129 aa)) folds into the C-type lysozyme domain. 4 cysteine pairs are disulfide-bonded: C25–C145, C49–C133, C83–C98, and C94–C112. Catalysis depends on residues E54 and D71.

It belongs to the glycosyl hydrolase 22 family. As to quaternary structure, monomer.

It localises to the secreted. Its subcellular location is the cell surface. The protein localises to the cell projection. The protein resides in the cilium. It is found in the flagellum. It carries out the reaction Hydrolysis of (1-&gt;4)-beta-linkages between N-acetylmuramic acid and N-acetyl-D-glucosamine residues in a peptidoglycan and between N-acetyl-D-glucosamine residues in chitodextrins.. May be involved sperm-egg plasma membrane adhesion and fusion during fertilization. Exhibits bacteriolytic activity in vitro against Micrococcus luteus and Staphylococcus aureus. Shows weak bacteriolytic activity against Gram-positive bacteria at physiological pH. Bacteriolytic activity is pH-dependent, with a maximum at around pH 5.6. This Bos taurus (Bovine) protein is Lysozyme-like protein 6 (LYZL6).